Reading from the N-terminus, the 226-residue chain is Beta-phosphoglucomutase (226 aa).

The Nucleophile role is filled by Asp-7. 2 residues coordinate Mg(2+): Asp-7 and Asp-9. Asp-7 carries the post-translational modification 4-aspartylphosphate. Asp-9 (proton donor/acceptor) is an active-site residue. Residues Asp-9, Gly-44, Ile-45, Arg-47, Ser-116, Arg-117, and Asn-118 each contribute to the beta-D-glucose 6-phosphate site. Mg(2+) is bound at residue Asp-170.

Belongs to the HAD-like hydrolase superfamily. CbbY/CbbZ/Gph/YieH family. As to quaternary structure, homodimer. Mg(2+) is required as a cofactor. In terms of processing, autophosphorylated.

It localises to the cytoplasm. It carries out the reaction beta-D-glucose 1-phosphate = beta-D-glucose 6-phosphate. Functionally, catalyzes the interconversion of D-glucose 1-phosphate (G1P) and D-glucose 6-phosphate (G6P), forming beta-D-glucose 1,6-(bis)phosphate (beta-G16P) as an intermediate. The protein is Beta-phosphoglucomutase (yvdM) of Bacillus subtilis (strain 168).